The following is a 727-amino-acid chain: Elongation factor 2 (727 aa).

The tr-type G domain maps to D19–L260. Residues A28–T35, D94–H98, and N148–D151 each bind GTP. Residue H603 is modified to Diphthamide.

The protein belongs to the TRAFAC class translation factor GTPase superfamily. Classic translation factor GTPase family. EF-G/EF-2 subfamily.

The protein resides in the cytoplasm. Its function is as follows. Catalyzes the GTP-dependent ribosomal translocation step during translation elongation. During this step, the ribosome changes from the pre-translocational (PRE) to the post-translocational (POST) state as the newly formed A-site-bound peptidyl-tRNA and P-site-bound deacylated tRNA move to the P and E sites, respectively. Catalyzes the coordinated movement of the two tRNA molecules, the mRNA and conformational changes in the ribosome. This chain is Elongation factor 2, found in Methanococcus maripaludis (strain C7 / ATCC BAA-1331).